Here is a 956-residue protein sequence, read N- to C-terminus: Transient receptor potential channel pyrexia (956 aa).

At 1-491 the chain is on the cytoplasmic side; the sequence is MENVRFSIIE…LFLKWRRIRK (491 aa). 8 ANK repeats span residues 132-161, 166-195, 198-227, 231-260, 265-294, 298-327, 331-362, and 366-395; these read RGRT…DPNR, KEVT…SINI, EKRS…DPNT, YTET…DVRS, GKVT…EVDC, SHQT…NVNA, DGRT…DVNK, and YGYT…DITA. A helical membrane pass occupies residues 492 to 512; sequence FFLMSLAYHTLFVILFTFYVI. At 513-525 the chain is on the extracellular side; it reads WVYVRCCKKEELC. The helical transmembrane segment at 526–546 threads the bilayer; the sequence is VAPGYVSTIGYLVIILNLILL. Residues 547 to 565 are Cytoplasmic-facing; that stretch reads GKEVFQMAHGLRGYAKYWE. A helical transmembrane segment spans residues 566–584; that stretch reads NWLQWTIGTGVLLCVTPET. Residues 585 to 601 lie on the Extracellular side of the membrane; that stretch reads VRTDDLTAVPVWQHHVA. The chain crosses the membrane as a helical span at residues 602-622; sequence AIVILLVWLELMMLVGRFPIF. Residues 623-638 are Cytoplasmic-facing; it reads GVYVQMFTKVAVNFAK. A helical transmembrane segment spans residues 639 to 659; the sequence is FLLAYICLLVAFGLSFAVLFN. Topologically, residues 660–701 are extracellular; that stretch reads DYPAFENITWSFLKSITMMSGELEFEDIFYGDYAVKFPVTAH. The N-linked (GlcNAc...) asparagine glycan is linked to Asn666. The helical transmembrane segment at 702-722 threads the bilayer; sequence IIFLSFVLLVTVILTNLMVGL. Residues 723–956 are Cytoplasmic-facing; sequence AVSDIQGLQV…VASSHIRRHR (234 aa).

Belongs to the transient receptor (TC 1.A.4) family. STrpC subfamily. In terms of assembly, homooligomer; between isoform A and isoform B. As to expression, expressed in various peripheral nerves and the central nerves in embryos. In adults, it is expressed in sensory neurons lying beneath the bristles around eyes, neurons innervating the bristles on the back of thorax and neurons in maxillary palps, proboscis and antennae. Expressed in multidendritic neurons, which mediate temperature sensing, as well as non-multidendritic neurons in larval epidermis. Localizes ubiquitously throughout neurites.

It is found in the membrane. Functionally, receptor-activated non-selective cation channel involved in protection or tolerance from high temperature stress. Activated by temperatures above 40 degrees Celsius. More permeable to K(+) than to Na(+). May act in stress protection allow flies to survive in natural environments. In Drosophila melanogaster (Fruit fly), this protein is Transient receptor potential channel pyrexia (pyx).